Here is a 499-residue protein sequence, read N- to C-terminus: Long chain base biosynthesis protein 2b (499 aa).

Residues 5-25 (VPYVTAATTLFSFGLIFGFGH) traverse the membrane as a helical segment. Lysine 322 is subject to N6-(pyridoxal phosphate)lysine.

It belongs to the class-II pyridoxal-phosphate-dependent aminotransferase family. Heterodimer with LCB1. Component of the serine palmitoyltransferase (SPT) complex, composed of LCB1 and LCB2. The cofactor is pyridoxal 5'-phosphate.

Its subcellular location is the endoplasmic reticulum membrane. It carries out the reaction L-serine + hexadecanoyl-CoA + H(+) = 3-oxosphinganine + CO2 + CoA. It functions in the pathway lipid metabolism; sphingolipid metabolism. In terms of biological role, serine palmitoyltransferase (SPT). The heterodimer formed with LCB1 constitutes the catalytic core. This Oryza sativa subsp. japonica (Rice) protein is Long chain base biosynthesis protein 2b.